Reading from the N-terminus, the 186-residue chain is Elongation factor P (186 aa).

The protein belongs to the elongation factor P family.

It is found in the cytoplasm. It functions in the pathway protein biosynthesis; polypeptide chain elongation. Functionally, involved in peptide bond synthesis. Stimulates efficient translation and peptide-bond synthesis on native or reconstituted 70S ribosomes in vitro. Probably functions indirectly by altering the affinity of the ribosome for aminoacyl-tRNA, thus increasing their reactivity as acceptors for peptidyl transferase. The chain is Elongation factor P from Prochlorococcus marinus (strain MIT 9312).